A 195-amino-acid polypeptide reads, in one-letter code: MGDQRQRSLSTSGDSLYIVLGLDKNASPEDIKKSYRKLALKYHPDKNPDNPEASEKFKEINNAHAILTDATKRNIYDKYGSLGLYVAEQFGEENVNTYFVLSSWWAKALFVFCGVITGCYFCCCLCCCCNCCCGKCKPKPPEGEEQEYYVSPEDLEAQLQSDMEKEGDGAIVVQPTSATETTQLTSDSHPSYHTE.

A J domain is found at 13 to 82 (GDSLYIVLGL…RNIYDKYGSL (70 aa)). The segment at 162 to 195 (DMEKEGDGAIVVQPTSATETTQLTSDSHPSYHTE) is disordered. A compositionally biased stretch (polar residues) spans 174–189 (QPTSATETTQLTSDSH).

Post-translationally, palmitoylated. Palmitoylation occurs probably in the cysteine-rich domain and regulates DNAJC5 stable membrane attachment.

It is found in the cytoplasm. The protein resides in the cytosol. The protein localises to the membrane. Its subcellular location is the cytoplasmic vesicle. It localises to the secretory vesicle. It is found in the chromaffin granule membrane. The protein resides in the melanosome. The protein localises to the cell membrane. In terms of biological role, may have an important role in presynaptic function. May be involved in calcium-dependent neurotransmitter release at nerve endings. The polypeptide is DnaJ homolog subfamily C member 5 (Tetronarce californica (Pacific electric ray)).